The following is a 512-amino-acid chain: 2-isopropylmalate synthase (512 aa).

In terms of domain architecture, Pyruvate carboxyltransferase spans 5–267; sequence LYIFDTTLRD…DSRVDATQIV (263 aa). Mn(2+) is bound by residues aspartate 14, histidine 202, histidine 204, and asparagine 238. The regulatory domain stretch occupies residues 393–512; sequence KLVSLKVVSE…EEKMNAQAAA (120 aa).

This sequence belongs to the alpha-IPM synthase/homocitrate synthase family. LeuA type 1 subfamily. In terms of assembly, homodimer. It depends on Mn(2+) as a cofactor.

Its subcellular location is the cytoplasm. The catalysed reaction is 3-methyl-2-oxobutanoate + acetyl-CoA + H2O = (2S)-2-isopropylmalate + CoA + H(+). Its pathway is amino-acid biosynthesis; L-leucine biosynthesis; L-leucine from 3-methyl-2-oxobutanoate: step 1/4. In terms of biological role, catalyzes the condensation of the acetyl group of acetyl-CoA with 3-methyl-2-oxobutanoate (2-ketoisovalerate) to form 3-carboxy-3-hydroxy-4-methylpentanoate (2-isopropylmalate). The chain is 2-isopropylmalate synthase from Chromobacterium violaceum (strain ATCC 12472 / DSM 30191 / JCM 1249 / CCUG 213 / NBRC 12614 / NCIMB 9131 / NCTC 9757 / MK).